A 946-amino-acid polypeptide reads, in one-letter code: DDB1- and CUL4-associated factor 5 (946 aa).

6 WD repeats span residues 51 to 91 (GHFG…HSRV), 99 to 139 (EHHS…LDVF), 140 to 180 (AHED…HGEP), 185 to 225 (NYPS…SSLL), 277 to 317 (FNSC…EAGG), and 331 to 370 (GHRS…GCTG). A disordered region spans residues 449–478 (GVSERSGYTDSESSASLPRSPPPTVDESAD). Polar residues predominate over residues 454-465 (SGYTDSESSASL). Residue Thr500 is modified to Phosphothreonine. 3 disordered regions span residues 527–656 (LSNE…MESV), 675–860 (SNNK…ELET), and 894–946 (CETP…KLKT). Residues Ser531 and Ser533 each carry the phosphoserine modification. Residues 531-544 (SDSEENVCEAELDT) are compositionally biased toward acidic residues. Residues 555-567 (PEDGSSSPSSSTS) are compositionally biased toward low complexity. A compositionally biased stretch (basic residues) spans 579–592 (ATTRQRNAMRRRQK). A compositionally biased stretch (low complexity) spans 625–638 (LSPSPDSSPERSAS). Phosphoserine is present on residues Ser626, Ser628, and Ser645. The segment covering 691 to 701 (EGRAGTSHKDN) has biased composition (basic and acidic residues). 2 stretches are compositionally biased toward polar residues: residues 760 to 769 (GTSQDTNNSG) and 808 to 819 (TLNSASGNCPRT).

As to quaternary structure, interacts with DDB1, CUL4A or CUL4B. Interacts with L3MBTL3. Interacts with SOX2. Interacts with DNMT1. Interacts with E2F1.

Its pathway is protein modification; protein ubiquitination. Its function is as follows. Is a substrate receptor for the CUL4-DDB1 E3 ubiquitin-protein ligase complex (CRL4), involved in the ubiquitination of a set of methylated non-histone proteins, including SOX2. The complex CRL4-DCAF5 is also involved in the ubiquitination of methylated DNMT1 and E2F1. In Mus musculus (Mouse), this protein is DDB1- and CUL4-associated factor 5 (Dcaf5).